The chain runs to 479 residues: MRHLWLLLLSVSLVQTQAATTDSDKVDLSIARGHRPVDRRKEEPPSLRPAPPPISGGGYRARPAKVDAGQKKVERKPPDAGGCVHGDGDMGVLCPTGCELRQTLLNHERPIKNSIAELNSNINSVSETSSVTFQYLTLLKDMWKKKQAQVKDNENVINEYSSILEDQKLYIDETVNDNIPLNLRVLRSILEDLRSKIQKLESDISAQTEYCHTPCTVNCNIPVVSGKECEEIIRKGGETSEMYLIQPDTSSKPYRVYCDMKTENGGWTVIQNRQDGSVDFGRKWDPYKKGFGNIATNEDTKKYCGLPGEYWLGNDKISQLTRIGPTELLIEMEDWKGDKVKAHYGGFTVQTEANKYQVSVNKYKGTAGNALMEGASQLVGENRTMTIHNGMFFSTYDRDNDGWVTTDPRKQCSKEDGGGWWYNRCHAANPNGRYYWGGLYSWDMSKHGTDDGVVWMNWKGSWYSMRRMSMKIRPVFPQQ.

The first 18 residues, 1-18 (MRHLWLLLLSVSLVQTQA), serve as a signal peptide directing secretion. The disordered stretch occupies residues 20–82 (TTDSDKVDLS…VERKPPDAGG (63 aa)). Positions 33–35 (GHR) are beta-chain polymerization, binding distal domain of another fibrin. 2 stretches are compositionally biased toward basic and acidic residues: residues 35–45 (RPVDRRKEEPP) and 64–78 (AKVD…RKPP). 2 disulfides stabilise this stretch: cysteine 219/cysteine 304 and cysteine 229/cysteine 258. The region spanning 220–476 (NIPVVSGKEC…RMSMKIRPVF (257 aa)) is the Fibrinogen C-terminal domain. An N-linked (GlcNAc...) asparagine glycan is attached at asparagine 382. A disulfide bridge links cysteine 412 with cysteine 425.

As to quaternary structure, heterohexamer; disulfide linked. Contains 2 sets of 3 non-identical chains (alpha, beta and gamma). The 2 heterotrimers are in head to head conformation with the N-termini in a small central domain. Conversion of fibrinogen to fibrin is triggered by thrombin, which cleaves fibrinopeptides A and B from alpha and beta chains, and thus exposes the N-terminal polymerization sites responsible for the formation of the soft clot.

It is found in the secreted. Functionally, cleaved by the protease thrombin to yield monomers which, together with fibrinogen alpha (FGA) and fibrinogen gamma (FGG), polymerize to form an insoluble fibrin matrix. Fibrin has a major function in hemostasis as one of the primary components of blood clots. In addition, functions during the early stages of wound repair to stabilize the lesion and guide cell migration during re-epithelialization. Was originally thought to be essential for platelet aggregation, based on in vitro studies using anticoagulated blood. However subsequent studies have shown that it is not absolutely required for thrombus formation in vivo. Enhances expression of SELP in activated platelets. Maternal fibrinogen is essential for successful pregnancy. Fibrin deposition is also associated with infection, where it protects against IFNG-mediated hemorrhage. May also facilitate the antibacterial immune response via both innate and T-cell mediated pathways. In Rattus norvegicus (Rat), this protein is Fibrinogen beta chain (Fgb).